The following is a 217-amino-acid chain: Snake venom metalloproteinase lebetase-4 (217 aa).

Residues serine 1–glutamate 14 constitute a propeptide that is removed on maturation. Glutamine 15 is subject to Pyrrolidone carboxylic acid. Positions arginine 21 to proline 217 constitute a Peptidase M12B domain. Positions 24 and 108 each coordinate Ca(2+). Cystine bridges form between cysteine 132–cysteine 212, cysteine 172–cysteine 196, and cysteine 174–cysteine 179. Histidine 157 contributes to the Zn(2+) binding site. Residue glutamate 158 is part of the active site. Residues histidine 161 and histidine 167 each contribute to the Zn(2+) site. Ca(2+)-binding residues include cysteine 212 and asparagine 215.

The protein belongs to the venom metalloproteinase (M12B) family. P-I subfamily. Monomer. Zn(2+) serves as cofactor. Expressed by the venom gland.

The protein localises to the secreted. With respect to regulation, fibrinolytic and caseinolytic activities are inhibited by Cd(2+), Cu(2+) and Co(2+) ions. Not inhibited by Mg(2+), Ca(2+) and Ba(2+). Also inhibited by EDTA, EGTA and 1,10-phenanthroline. Snake venom zinc metalloprotease that hydrolyzes the Aalpha-chain and more slowly the Bbeta-chain of fibrin and fibrinogen. Also hydrolyzes casein and B-chain of oxidized insulin. Its fibrinolytic activity is direct, without any plasminogen activation. Inhibits ADP-induced and collagen-induced platelet aggregation. Shows low hemorrhagic activity. Cleaves the plasma proteinase inhibitors alpha(2)-macroglobulin (A2M) and alpha(2)M-related pregnancy zone protein (PZP), and is inhibited by them. The protein is Snake venom metalloproteinase lebetase-4 of Macrovipera lebetinus (Levantine viper).